Reading from the N-terminus, the 371-residue chain is Cytochrome b (371 aa).

The next 4 membrane-spanning stretches (helical) occupy residues 25 to 45 (FGSMLLTCLALQTLTGFFLAV), 69 to 90 (WMMQNLHAIGASMFFICIYIHI), 105 to 125 (WMSGITLLIILMATAFFGYVL), and 170 to 190 (FFALHFILPFAIISLSSLHVI). Heme b contacts are provided by His-75 and His-89. His-174 and His-188 together coordinate heme b. Position 193 (His-193) interacts with a ubiquinone. A run of 4 helical transmembrane segments spans residues 218 to 238 (YKDLLLLTLMILSLLIIVSFF), 280 to 300 (LGGALALVMSIMILLTIPFTH), 312 to 332 (LSQLMFWTLVSTFITITWAAT), and 339 to 358 (FIIISQVTATLYFTFFISTP).

This sequence belongs to the cytochrome b family. The cytochrome bc1 complex contains 3 respiratory subunits (MT-CYB, CYC1 and UQCRFS1), 2 core proteins (UQCRC1 and UQCRC2) and probably 6 low-molecular weight proteins. The cofactor is heme b.

The protein resides in the mitochondrion inner membrane. Functionally, component of the ubiquinol-cytochrome c reductase complex (complex III or cytochrome b-c1 complex) that is part of the mitochondrial respiratory chain. The b-c1 complex mediates electron transfer from ubiquinol to cytochrome c. Contributes to the generation of a proton gradient across the mitochondrial membrane that is then used for ATP synthesis. This is Cytochrome b (MT-CYB) from Python sebae (African rock python).